Reading from the N-terminus, the 429-residue chain is Glutamate-1-semialdehyde 2,1-aminomutase (429 aa).

K267 is subject to N6-(pyridoxal phosphate)lysine.

The protein belongs to the class-III pyridoxal-phosphate-dependent aminotransferase family. HemL subfamily. As to quaternary structure, homodimer. Requires pyridoxal 5'-phosphate as cofactor.

The protein localises to the cytoplasm. It catalyses the reaction (S)-4-amino-5-oxopentanoate = 5-aminolevulinate. The protein operates within porphyrin-containing compound metabolism; protoporphyrin-IX biosynthesis; 5-aminolevulinate from L-glutamyl-tRNA(Glu): step 2/2. This chain is Glutamate-1-semialdehyde 2,1-aminomutase, found in Xanthomonas campestris pv. campestris (strain 8004).